Here is an 89-residue protein sequence, read N- to C-terminus: Helix-loop-helix protein 15 (89 aa).

The interval 1-32 (MLMEDGGLDTTSEEYRKLSKAERRKRRRATPK) is disordered. Over residues 22 to 32 (ERRKRRRATPK) the composition is skewed to basic residues. A basic motif region spans residues 32 to 45 (KYRNLHATRERIRV). Residues 32–84 (KYRNLHATRERIRVESFNMAFSQLRALLPTLPVEKKLSKIEILRFSIAYISFL) enclose the bHLH domain. Positions 46–84 (ESFNMAFSQLRALLPTLPVEKKLSKIEILRFSIAYISFL) are helix-loop-helix motif.

In terms of tissue distribution, expressed in sensory head neurons of the lateral ganglion.

Its subcellular location is the nucleus. Functionally, transcription factor which binds the E box motif 5'-CA[TC][AG]TG-3'. Involved in modulating physiological aging, probably by regulating expression of branched-chain amino acid transferase-1, bcat-1. This Caenorhabditis elegans protein is Helix-loop-helix protein 15.